A 1028-amino-acid chain; its full sequence is Contactin-6 (1028 aa).

The signal sequence occupies residues 1 to 19; that stretch reads MRLLWKLVILLPLINSCAG. 6 Ig-like C2-type domains span residues 32-117, 122-208, 227-308, 318-402, 408-495, and 499-587; these read PQDV…AKLQ, EDFE…RSVQ, PKIE…RNLA, PEWE…AELR, PDFS…GSLI, and RTVI…ERLS. 6 disulfide bridges follow: cysteine 50–cysteine 100, cysteine 144–cysteine 196, cysteine 249–cysteine 297, cysteine 339–cysteine 386, cysteine 431–cysteine 479, and cysteine 521–cysteine 577. N-linked (GlcNAc...) asparagine glycans are attached at residues asparagine 65 and asparagine 193. Residues asparagine 368, asparagine 377, and asparagine 468 are each glycosylated (N-linked (GlcNAc...) asparagine). 4 Fibronectin type-III domains span residues 600–698, 703–800, 805–901, and 902–996; these read PPED…TKAS, APVN…SGED, APRG…TKKS, and PPSQ…KMSS. N-linked (GlcNAc...) asparagine glycans are attached at residues asparagine 659, asparagine 765, asparagine 860, and asparagine 865. Tyrosine 882 carries the post-translational modification Phosphotyrosine. Positions 887 to 902 are enriched in polar residues; sequence TGPSSPPVNVTTKKSP. Residues 887-908 are disordered; sequence TGPSSPPVNVTTKKSPPSQPPA. N-linked (GlcNAc...) asparagine glycans are attached at residues asparagine 895, asparagine 931, asparagine 956, and asparagine 957. A lipid anchor (GPI-anchor amidated serine) is attached at serine 999. Positions 1000-1028 are cleaved as a propeptide — removed in mature form; the sequence is VGVQILKPSTQFLTMVGFFYCFVIQPLSR.

The protein belongs to the immunoglobulin superfamily. Contactin family. As to quaternary structure, interacts with PTPRG. As to expression, specifically expressed in neuronal cells. In brain, it is expressed in spinal cord, cerebrum and cerebellum. At 17 dpc, it is expressed in hippocampus, cerebellum, and the brain stem. Strongly expressed after birth with a maximum level between P1 and P21, which corresponds to the time frame of oligodendrogliogenesis.

It localises to the cell membrane. Contactins mediate cell surface interactions during nervous system development. Participates in oligodendrocytes generation by acting as a ligand of NOTCH1. Its association with NOTCH1 promotes NOTCH1 activation through the released notch intracellular domain (NICD) and subsequent translocation to the nucleus. May be involved in motor coordination. The chain is Contactin-6 (Cntn6) from Rattus norvegicus (Rat).